The following is a 572-amino-acid chain: Arginine--tRNA ligase (572 aa).

The short motif at 122 to 132 (PNLAKEMHVGH) is the 'HIGH' region element.

This sequence belongs to the class-I aminoacyl-tRNA synthetase family. In terms of assembly, monomer.

Its subcellular location is the cytoplasm. The enzyme catalyses tRNA(Arg) + L-arginine + ATP = L-arginyl-tRNA(Arg) + AMP + diphosphate. This is Arginine--tRNA ligase from Neisseria meningitidis serogroup A / serotype 4A (strain DSM 15465 / Z2491).